A 164-amino-acid polypeptide reads, in one-letter code: SsrA-binding protein (164 aa).

The protein belongs to the SmpB family.

It is found in the cytoplasm. In terms of biological role, required for rescue of stalled ribosomes mediated by trans-translation. Binds to transfer-messenger RNA (tmRNA), required for stable association of tmRNA with ribosomes. tmRNA and SmpB together mimic tRNA shape, replacing the anticodon stem-loop with SmpB. tmRNA is encoded by the ssrA gene; the 2 termini fold to resemble tRNA(Ala) and it encodes a 'tag peptide', a short internal open reading frame. During trans-translation Ala-aminoacylated tmRNA acts like a tRNA, entering the A-site of stalled ribosomes, displacing the stalled mRNA. The ribosome then switches to translate the ORF on the tmRNA; the nascent peptide is terminated with the 'tag peptide' encoded by the tmRNA and targeted for degradation. The ribosome is freed to recommence translation, which seems to be the essential function of trans-translation. The polypeptide is SsrA-binding protein (Shewanella woodyi (strain ATCC 51908 / MS32)).